The primary structure comprises 185 residues: Putative manganese efflux pump MntP (185 aa).

A run of 6 helical transmembrane segments spans residues 3–23 (PFAV…VSVG), 41–61 (AVFG…GVAA), 70–90 (HWLA…AAVW), 101–121 (SFTV…AVGV), 123–143 (LAFL…ATFL), and 165–185 (AVAG…HLTA).

The protein belongs to the MntP (TC 9.B.29) family.

It is found in the cell inner membrane. Probably functions as a manganese efflux pump. This chain is Putative manganese efflux pump MntP, found in Bradyrhizobium sp. (strain BTAi1 / ATCC BAA-1182).